The primary structure comprises 421 residues: Nucleoprotein (421 aa).

Composition is skewed to polar residues over residues 1–11 (MSDNGPQNQRS) and 21–30 (TDSTDNNQDG). Residues 1-49 (MSDNGPQNQRSAPRITFGGPTDSTDNNQDGGRSGARPKQRRPQGLPNNT) are disordered. An RNA-binding region spans residues 41 to 186 (RPQGLPNNTA…RGGSQASSRS (146 aa)). Residues 48-175 (NTASWFTALT…TLPKGFYAEG (128 aa)) enclose the CoV N NTD domain. Arginine 92, arginine 107, and arginine 149 together coordinate RNA. Disordered stretches follow at residues 168-213 (PKGF…MASG), 233-268 (KVSGRSQQQQGQTVTKKSAAEASKKPRQKRTATKQY), and 363-421 (FPPT…STQA). Position 176 is a phosphoserine; by host (serine 176). The segment covering 179–206 (GSQASSRSSSRSRGNSRNSTPGSSRGNS) has biased composition (low complexity). A compositionally biased stretch (polar residues) spans 233–248 (KVSGRSQQQQGQTVTK). Residues 247-364 (TKKSAAEASK…KHIDAYKIFP (118 aa)) form the CoV N CTD domain. Residues 258-361 (PRQKRTATKQ…LLNKHIDAYK (104 aa)) form a dimerization region. Over residues 367-378 (EPKKDKKKKTDE) the composition is skewed to basic and acidic residues. Residues 405-421 (RQLQNSMSGASADSTQA) are compositionally biased toward polar residues.

This sequence belongs to the betacoronavirus nucleocapsid protein family. As to quaternary structure, homooligomer. Both monomeric and oligomeric forms interact with RNA. Interacts with protein M. Interacts with NSP3; this interaction serves to tether the genome to the newly translated replicase-transcriptase complex at a very early stage of infection. ADP-ribosylated. The ADP-ribosylation is retained in the virion during infection. Post-translationally, phosphorylated on serine and threonine residues.

The protein localises to the virion. The protein resides in the host endoplasmic reticulum-Golgi intermediate compartment. Its subcellular location is the host Golgi apparatus. Functionally, packages the positive strand viral genome RNA into a helical ribonucleocapsid (RNP) and plays a fundamental role during virion assembly through its interactions with the viral genome and membrane protein M. Plays an important role in enhancing the efficiency of subgenomic viral RNA transcription as well as viral replication. This Bat coronavirus Rp3/2004 (BtCoV/Rp3/2004) protein is Nucleoprotein.